A 266-amino-acid chain; its full sequence is Dolichol-phosphate mannosyltransferase subunit 1 (266 aa).

The span at 1–19 shows a compositional bias: low complexity; it reads MASPGASRGASAATAAAAS. The tract at residues 1–31 is disordered; that stretch reads MASPGASRGASAATAAAASPRPPQGRSSRRD. At alanine 2 the chain carries N-acetylalanine. A Phosphoserine modification is found at serine 3. 11 residues coordinate GDP-alpha-D-mannose: proline 38, tyrosine 40, glutamate 42, isoleucine 69, aspartate 71, aspartate 124, alanine 125, aspartate 126, arginine 153, arginine 240, and lysine 246. Aspartate 126 serves as a coordination point for Mg(2+). Residue aspartate 126 participates in Mn(2+) binding.

The protein belongs to the glycosyltransferase 2 family. As to quaternary structure, component of the dolichol-phosphate mannose (DPM) synthase complex composed of DPM1, DPM2 and DPM3; within the complex, directly interacts with DPM3. This interaction may stabilize DPM1. It depends on Mg(2+) as a cofactor. Mn(2+) is required as a cofactor. Requires Ca(2+) as cofactor.

It is found in the endoplasmic reticulum. The enzyme catalyses a di-trans,poly-cis-dolichyl phosphate + GDP-alpha-D-mannose = a di-trans,poly-cis-dolichyl beta-D-mannosyl phosphate + GDP. The protein operates within protein modification; protein glycosylation. Transfers mannose from GDP-mannose to dolichol monophosphate to form dolichol phosphate mannose (Dol-P-Man) which is the mannosyl donor in pathways leading to N-glycosylation, glycosyl phosphatidylinositol membrane anchoring, and O-mannosylation of proteins; catalytic subunit of the dolichol-phosphate mannose (DPM) synthase complex. This Cricetulus griseus (Chinese hamster) protein is Dolichol-phosphate mannosyltransferase subunit 1 (DPM1).